A 345-amino-acid polypeptide reads, in one-letter code: Linoleate 10R-lipoxygenase COP4 (345 aa).

Positions 87, 91, 222, 226, and 230 each coordinate Mg(2+). Residues 87–91 carry the DDXXD motif motif; it reads DEISD.

The protein belongs to the terpene synthase family. The cofactor is Mg(2+).

The catalysed reaction is (2E,6E)-farnesyl diphosphate + H2O = cubebol + diphosphate. It carries out the reaction (2E,6E)-farnesyl diphosphate = beta-copaene + diphosphate. It catalyses the reaction (2E,6E)-farnesyl diphosphate = beta-cubebene + diphosphate. The enzyme catalyses (2E,6E)-farnesyl diphosphate = (+)-sativene + diphosphate. In terms of biological role, sesquiterpene synthase that catalyzes the cyclization of farnesyl diphosphate (FPP) into multiple products, including germacrene D, beta-copaene, beta-cubebene, (+)-sativene and cubebol, a natural sesquiterpene alcohol used in the food industry for its cooling and refreshing taste. Terpenoid hydrocarbons resulting from cyclization of farnesyl diphosphate are intermediates in the biosynthesis of biologically active compounds such as antibiotics, toxins and pheromones. This Coprinopsis cinerea (strain Okayama-7 / 130 / ATCC MYA-4618 / FGSC 9003) (Inky cap fungus) protein is Linoleate 10R-lipoxygenase COP4 (COP4).